A 186-amino-acid chain; its full sequence is MEPSNDVALDIIVTNVVSVFRTRCHLNLRTIGLEGTNVIYKPEVGKVLMKLRKPRITASIWSSGKIICTGATSEEEAKLGARRLARCLQKMGFKVRFSDFKVVNVLAVCSMPFQIRLIEFTKNNRPIASYEPELHPAASYRIKNLRSTVQVFSTGNITVTGPNVQSVASAVEEIYPLLFECRKTLS.

The protein belongs to the TBP family.

Its subcellular location is the cytoplasm. The protein resides in the nucleus. Part of a specialized transcription system that mediates the transcription of most ribosomal proteins through the 5'-TCT-3' motif which is a core promoter element at these genes. Seems to also mediate the transcription of NF1. Does not bind the TATA box. Members of the TBP family are differentially required to regulate transcription and development during early embryogenesis. This is TATA box-binding protein-like 1 from Danio rerio (Zebrafish).